A 162-amino-acid polypeptide reads, in one-letter code: Phosphopantetheine adenylyltransferase (162 aa).

Serine 9 contacts substrate. ATP is bound by residues 9–10 and histidine 17; that span reads SF. Substrate is bound by residues lysine 41, leucine 77, and lysine 91. ATP contacts are provided by residues 92–94, glutamate 102, and 126–132; these read GLR and YAFLSSS.

The protein belongs to the bacterial CoaD family. As to quaternary structure, homohexamer. Requires Mg(2+) as cofactor.

It localises to the cytoplasm. It catalyses the reaction (R)-4'-phosphopantetheine + ATP + H(+) = 3'-dephospho-CoA + diphosphate. It participates in cofactor biosynthesis; coenzyme A biosynthesis; CoA from (R)-pantothenate: step 4/5. Functionally, reversibly transfers an adenylyl group from ATP to 4'-phosphopantetheine, yielding dephospho-CoA (dPCoA) and pyrophosphate. The protein is Phosphopantetheine adenylyltransferase of Parafrankia sp. (strain EAN1pec).